A 236-amino-acid chain; its full sequence is 2,3,4,5-tetrahydropyridine-2,6-dicarboxylate N-acetyltransferase (236 aa).

Belongs to the transferase hexapeptide repeat family. DapH subfamily.

The enzyme catalyses (S)-2,3,4,5-tetrahydrodipicolinate + acetyl-CoA + H2O = L-2-acetamido-6-oxoheptanedioate + CoA. The protein operates within amino-acid biosynthesis; L-lysine biosynthesis via DAP pathway; LL-2,6-diaminopimelate from (S)-tetrahydrodipicolinate (acetylase route): step 1/3. Functionally, catalyzes the transfer of an acetyl group from acetyl-CoA to tetrahydrodipicolinate. The chain is 2,3,4,5-tetrahydropyridine-2,6-dicarboxylate N-acetyltransferase from Lactobacillus helveticus (strain DPC 4571).